The chain runs to 257 residues: UPF0246 protein Sbal195_1149 (257 aa).

This sequence belongs to the UPF0246 family.

The chain is UPF0246 protein Sbal195_1149 from Shewanella baltica (strain OS195).